The following is a 148-amino-acid chain: Small ribosomal subunit protein eS19 (148 aa).

It belongs to the eukaryotic ribosomal protein eS19 family. As to quaternary structure, part of the 30S ribosomal subunit.

Its function is as follows. May be involved in maturation of the 30S ribosomal subunit. This is Small ribosomal subunit protein eS19 from Methanocaldococcus jannaschii (strain ATCC 43067 / DSM 2661 / JAL-1 / JCM 10045 / NBRC 100440) (Methanococcus jannaschii).